The chain runs to 92 residues: Small ribosomal subunit protein bS18 (92 aa).

The disordered stretch occupies residues 1-27; sequence MTQQSNSADRKPRGKGPKRPRKPKVDP. Residues 12–22 show a composition bias toward basic residues; that stretch reads PRGKGPKRPRK.

This sequence belongs to the bacterial ribosomal protein bS18 family. As to quaternary structure, part of the 30S ribosomal subunit. Forms a tight heterodimer with protein bS6.

Its function is as follows. Binds as a heterodimer with protein bS6 to the central domain of the 16S rRNA, where it helps stabilize the platform of the 30S subunit. This chain is Small ribosomal subunit protein bS18, found in Deinococcus deserti (strain DSM 17065 / CIP 109153 / LMG 22923 / VCD115).